A 642-amino-acid polypeptide reads, in one-letter code: MPIITLPDGSQRHFDNPVSTLEVAQSIGPGLAKATIAGRVNGARVDACDLIEHDASLEIITTKDEVDGLEIVRHSCAHLLGHALKQLYPNAKMAIGPTIDSGFYYDIDLEQSLSQEDLEKIEARMVELAKTKYAVVKKKVSWQEARDTFESRGESYKMEILDENVARDDRPGLYHHEEYIDMCRGPHVPHMGFCQNFKLLNIAGAYWRGNSDNKMLQRIYGTAFHDKKALQAHLTRLEEAAKRDHRKIGKQLDLFHMQQEAPGMVFWHHNGWSVFRELEIFIRHKLNEYGYQEVKGPLMMDRVLWERSGHWDKYADAMFTTSSENREYAIKPMNCPGHIQIFNQGLKSYRDLPLRMAEFGSCHRNEPSGSLHGIMRVRGFTQDDAHIFCTEDQIQQEVTSCIKMVYDTYTTFGFQNIVVKLSTRPEKRVGSDEIWDKSEQALIDSLKAMDIPFEIQEGEGAFYGPKIEFTLYDCLDRAWQCGTVQLDFNLPTRLGATYVGESNERLIPVMIHRAILGSLERFIGILIEEYAGFFPTWLAPEQAVVVNITDKQADYAHEVAQKLQKCGIRAKADLRNEKIGFKIREHTLKRVPYMLVCGDQEMEAGEIAVRTRKGKDLGKFKLDDFIAHIQAEIASRKLNLEE.

Positions 1–61 (MPIITLPDGS…EHDASLEIIT (61 aa)) constitute a TGS domain. Positions 244 to 535 (DHRKIGKQLD…LIEEYAGFFP (292 aa)) are catalytic. The Zn(2+) site is built by C335, H386, and H512.

This sequence belongs to the class-II aminoacyl-tRNA synthetase family. In terms of assembly, homodimer. Zn(2+) is required as a cofactor.

It is found in the cytoplasm. It carries out the reaction tRNA(Thr) + L-threonine + ATP = L-threonyl-tRNA(Thr) + AMP + diphosphate + H(+). Catalyzes the attachment of threonine to tRNA(Thr) in a two-step reaction: L-threonine is first activated by ATP to form Thr-AMP and then transferred to the acceptor end of tRNA(Thr). Also edits incorrectly charged L-seryl-tRNA(Thr). The chain is Threonine--tRNA ligase from Vibrio cholerae serotype O1 (strain ATCC 39541 / Classical Ogawa 395 / O395).